A 170-amino-acid polypeptide reads, in one-letter code: Cathelicidin antimicrobial peptide (170 aa).

The first 30 residues, 1 to 30 (MKTQRHGPSLGRWSLVLLLLGLVMPLAIVA), serve as a signal peptide directing secretion. The propeptide at 31-131 (QVLSYQEAVL…DISCDKDNRR (101 aa)) is cathelin-like domain (CLD). Intrachain disulfides connect cysteine 86–cysteine 97 and cysteine 108–cysteine 125. Residues 150 to 162 (LKKIGQKIKDFWG) are active core.

It belongs to the cathelicidin family. In terms of assembly, monomer, homodimer or homotrimer (in vitro). Oligomerizes as tetra- or hexamer in solution (in vitro). Post-translationally, proteolytically cleaved by proteinase PRTN3 into antibacterial peptide LL-37. Proteolytically cleaved by cathepsin CTSG and neutrophil elastase ELANE. In terms of processing, resistant to proteolytic degradation in solution, and when bound to both zwitterionic (mimicking mammalian membranes) and negatively charged membranes (mimicking bacterial membranes). After secretion onto the skin surface, the CAMP gene product is processed by a serine protease-dependent mechanism into multiple novel antimicrobial peptides distinct from and shorter than cathelicidin LL-37. These peptides show enhanced antimicrobial action, acquiring the ability to kill skin pathogens such as S.aureus, E.coli and C.albicans. These peptides have lost the ability to stimulate CXCL8/IL8 release from keratinocytes. The peptides act synergistically, killing bacteria at lower concentrations when present together, and maintain activity at increased salt condition.

It localises to the secreted. The protein localises to the vesicle. Functionally, antimicrobial protein that is an integral component of the innate immune system. Binds to bacterial lipopolysaccharides (LPS). Acts via neutrophil N-formyl peptide receptors to enhance the release of CXCL2. Postsecretory processing generates multiple cathelicidin antimicrobial peptides with various lengths which act as a topical antimicrobial defense in sweat on skin. The unprocessed precursor form, cathelicidin antimicrobial peptide, inhibits the growth of Gram-negative E.coli and E.aerogenes with efficiencies comparable to that of the mature peptide LL-37 (in vitro). In terms of biological role, antimicrobial peptide that is an integral component of the innate immune system. Binds to bacterial lipopolysaccharides (LPS). Causes membrane permeabilization by forming transmembrane pores (in vitro). Causes lysis of E.coli. Exhibits antimicrobial activity against Gram-negative bacteria such as P.aeruginosa, S.typhimurium, E.aerogenes, E.coli and P.syringae, Gram-positive bacteria such as L.monocytogenes, S.epidermidis, S.pyogenes and S.aureus, as well as vancomycin-resistant enterococci (in vitro). Exhibits antimicrobial activity against methicillin-resistant S.aureus, P.mirabilis, and C.albicans in low-salt media, but not in media containing 100 mM NaCl (in vitro). Forms chiral supramolecular assemblies with quinolone signal (PQS) molecules of P.aeruginosa, which may lead to interference of bacterial quorum signaling and perturbance of bacterial biofilm formation. May form supramolecular fiber-like assemblies on bacterial membranes. Induces cytokine and chemokine producation as well as TNF/TNFA and CSF2/GMCSF production in normal human keratinocytes. Exhibits hemolytic activity against red blood cells. Exhibits antimicrobial activity against E.coli and B.megaterium (in vitro). This is Cathelicidin antimicrobial peptide from Trachypithecus cristatus (Silvered leaf-monkey).